Consider the following 310-residue polypeptide: tRNA uridine(34) hydroxylase (310 aa).

The Rhodanese domain occupies 127-225 (KDKNTIVVDT…YLEDMSKEES (99 aa)). Residue C185 is the Cysteine persulfide intermediate of the active site.

Belongs to the TrhO family.

It carries out the reaction uridine(34) in tRNA + AH2 + O2 = 5-hydroxyuridine(34) in tRNA + A + H2O. Its function is as follows. Catalyzes oxygen-dependent 5-hydroxyuridine (ho5U) modification at position 34 in tRNAs. The chain is tRNA uridine(34) hydroxylase from Prochlorococcus marinus subsp. pastoris (strain CCMP1986 / NIES-2087 / MED4).